A 676-amino-acid chain; its full sequence is Potassium-transporting ATPase ATP-binding subunit (676 aa).

A run of 4 helical transmembrane segments spans residues 24-44 (NPVM…CFYP), 45-65 (MGIP…TLLF), 212-232 (IFLI…VPFT), and 246-266 (SLVI…GALI). The active-site 4-aspartylphosphate intermediate is Asp-302. ATP is bound by residues Asp-339, Glu-343, 372 to 379 (FSAKTRMS), and Lys-390. Mg(2+) is bound by residues Asp-513 and Asp-517. Helical transmembrane passes span 573-593 (FSIA…FYSI), 611-631 (AILS…PLAL), and 656-676 (GIIA…LIIL).

This sequence belongs to the cation transport ATPase (P-type) (TC 3.A.3) family. Type IA subfamily. The system is composed of three essential subunits: KdpA, KdpB and KdpC.

It localises to the cell membrane. It carries out the reaction K(+)(out) + ATP + H2O = K(+)(in) + ADP + phosphate + H(+). In terms of biological role, part of the high-affinity ATP-driven potassium transport (or Kdp) system, which catalyzes the hydrolysis of ATP coupled with the electrogenic transport of potassium into the cytoplasm. This subunit is responsible for energy coupling to the transport system and for the release of the potassium ions to the cytoplasm. This chain is Potassium-transporting ATPase ATP-binding subunit, found in Enterococcus faecalis (strain ATCC 700802 / V583).